A 374-amino-acid chain; its full sequence is Outer membrane protein assembly factor BamC (374 aa).

An N-terminal signal peptide occupies residues 1-22 (MSKFYKSGRVTTAVIVALSLSA). C23 is lipidated: N-palmitoyl cysteine. The S-diacylglycerol cysteine moiety is linked to residue C23.

The protein belongs to the BamC family. In terms of assembly, part of the Bam complex.

It is found in the cell outer membrane. Its function is as follows. Part of the outer membrane protein assembly complex, which is involved in assembly and insertion of beta-barrel proteins into the outer membrane. The polypeptide is Outer membrane protein assembly factor BamC (Psychromonas ingrahamii (strain DSM 17664 / CCUG 51855 / 37)).